The chain runs to 251 residues: MWIGIISLFPEMFKAITDFGVTGRAIKQNLLQIECWNPRDFTFDKHHTVDDRPYGGGPGMLMMVQPLRDAIQVAKQVARSEDGVEAKVIYLSPQGRKLDQQGVRELSANRKLILICGRYEGVDERLIQSEVDEEWSIGDYVLTGGELPAMTLIDAIARFVPGVLGKQASALEDSFAEGLLDCPHYTRPEVLDNMPVPQVLMSGNHEQIRKWRLAQSLERTWLRRPELLDSLALTDEQRVLLAKIKQQYKIS.

S-adenosyl-L-methionine is bound by residues Gly117 and 137-142 (IGDYVL).

Belongs to the RNA methyltransferase TrmD family. As to quaternary structure, homodimer.

Its subcellular location is the cytoplasm. It carries out the reaction guanosine(37) in tRNA + S-adenosyl-L-methionine = N(1)-methylguanosine(37) in tRNA + S-adenosyl-L-homocysteine + H(+). In terms of biological role, specifically methylates guanosine-37 in various tRNAs. This Haemophilus ducreyi (strain 35000HP / ATCC 700724) protein is tRNA (guanine-N(1)-)-methyltransferase.